The sequence spans 599 residues: 2-succinyl-5-enolpyruvyl-6-hydroxy-3-cyclohexene-1-carboxylate synthase (599 aa).

The span at 1-21 (MTSENPLDPNNAYAAADDAPL) shows a compositional bias: low complexity. The interval 1 to 35 (MTSENPLDPNNAYAAADDAPLSEGDPTGAPADSGS) is disordered.

Belongs to the TPP enzyme family. MenD subfamily. Homodimer. Requires Mg(2+) as cofactor. It depends on Mn(2+) as a cofactor. The cofactor is thiamine diphosphate.

The catalysed reaction is isochorismate + 2-oxoglutarate + H(+) = 5-enolpyruvoyl-6-hydroxy-2-succinyl-cyclohex-3-ene-1-carboxylate + CO2. It participates in quinol/quinone metabolism; 1,4-dihydroxy-2-naphthoate biosynthesis; 1,4-dihydroxy-2-naphthoate from chorismate: step 2/7. Its pathway is quinol/quinone metabolism; menaquinone biosynthesis. Functionally, catalyzes the thiamine diphosphate-dependent decarboxylation of 2-oxoglutarate and the subsequent addition of the resulting succinic semialdehyde-thiamine pyrophosphate anion to isochorismate to yield 2-succinyl-5-enolpyruvyl-6-hydroxy-3-cyclohexene-1-carboxylate (SEPHCHC). This chain is 2-succinyl-5-enolpyruvyl-6-hydroxy-3-cyclohexene-1-carboxylate synthase, found in Arthrobacter sp. (strain FB24).